Reading from the N-terminus, the 425-residue chain is Nuclear hormone receptor family member nhr-13 (425 aa).

The nuclear receptor DNA-binding region spans 5–83; that stretch reads PNSCEVCSSS…IGMKPLLVKS (79 aa). 2 consecutive NR C4-type zinc fingers follow at residues 11-30 and 46-71; these read CSSS…CKAC and CIDQ…LKKC. Residues 108 to 148 are disordered; that stretch reads VKENSEEIQNDDDPQESDAEMENESTPGPSSEPSENVSAEN. Acidic residues predominate over residues 113–130; it reads EEIQNDDDPQESDAEMEN. The span at 131-142 shows a compositional bias: low complexity; sequence ESTPGPSSEPSE. The NR LBD domain occupies 147 to 414; it reads ENQETVTKFL…KSMISLTSFW (268 aa).

Belongs to the nuclear hormone receptor family. May interact with nuclear hormone receptor nhr-49.

It localises to the nucleus. In terms of biological role, orphan nuclear receptor. Involved in regulating fatty acid desaturase genes, acting in concert with nuclear hormone receptor nhr-49. The protein is Nuclear hormone receptor family member nhr-13 (nhr-13) of Caenorhabditis elegans.